The following is a 46-amino-acid chain: MNFGIKPDVSSGPRKGGPFKELSDFSKTSPTPQQPRSLSGKSVMLP.

The tract at residues 1–46 (MNFGIKPDVSSGPRKGGPFKELSDFSKTSPTPQQPRSLSGKSVMLP) is disordered. Over residues 25 to 40 (FSKTSPTPQQPRSLSG) the composition is skewed to polar residues.

This is an uncharacterized protein from Dictyostelium discoideum (Social amoeba).